Reading from the N-terminus, the 4307-residue chain is Cytoplasmic dynein 2 heavy chain 1 (4307 aa).

The interval 1–1650 is stem; it reads MANGTADVRK…CVQMVDSEFQ (1650 aa). Position 145–152 (145–152) interacts with ATP; sequence LGIVLRRS. The stretch at 1074–1103 forms a coiled coil; the sequence is NTLDKSAKLIKEKKIEFDDLEVTRKKLVDD. 4 AAA regions span residues 1651 to 1875, 1938 to 2161, 2251 to 2505, and 2617 to 2863; these read YTYE…VLRG, ELSA…KQND, ADDF…WVLG, and HYGR…ESCK. Residues 1689-1696, 1979-1986, 2291-2298, and 2655-2662 each bind ATP; these read GPAGTGKT, GPSGAGKS, GPEGCGKG, and GRSGVGRR. Positions 2881-3169 are stalk; it reads AISSSKKKEL…AEVSKAQETI (289 aa). Coiled-coil stretches lie at residues 2897 to 2982, 3109 to 3200, and 3408 to 3442; these read LQAG…KEVQ, LETE…LATL, and IQHE…SLLE. 2 AAA regions span residues 3244–3473 and 3690–3905; these read LCTE…LIQE and MALF…IIDR.

Belongs to the dynein heavy chain family. The cytoplasmic dynein complex 2 is probably composed by a heavy chain DYNC2H1 homodimer and a number of DYNC2LI1 light intermediate chains.

Its subcellular location is the cytoplasm. It localises to the cytoskeleton. It is found in the cilium axoneme. The protein resides in the cell membrane. Its function is as follows. May function as a motor for intraflagellar retrograde transport. Functions in cilia biogenesis. May play a role in transport between endoplasmic reticulum and Golgi or organization of the Golgi in cells. In Homo sapiens (Human), this protein is Cytoplasmic dynein 2 heavy chain 1 (DYNC2H1).